A 580-amino-acid chain; its full sequence is Long-chain-fatty-acid--AMP ligase FadD28 (580 aa).

The tract at residues 421-440 (SERTFGGKIVTPSPGTPEGP) is disordered.

This sequence belongs to the ATP-dependent AMP-binding enzyme family.

The catalysed reaction is holo-[mycocerosate synthase] + a long-chain fatty acid + ATP = a long-chain fatty acyl-[mycocerosate synthase] + AMP + diphosphate. It carries out the reaction a long-chain fatty acid + ATP + H(+) = a long-chain fatty acyl-AMP + diphosphate. The enzyme catalyses holo-[mycocerosate synthase] + a long-chain fatty acyl-AMP = a long-chain fatty acyl-[mycocerosate synthase] + AMP + H(+). Its pathway is lipid metabolism; fatty acid biosynthesis. Its function is as follows. Involved in the biosynthesis of phthiocerol dimycocerosate (PDIM), a cell wall-associated lipid found only in pathogenic mycobacteria. Catalyzes the activation of long-chain fatty acids as acyl-adenylates (acyl-AMP), which are then transferred to the multifunctional polyketide synthase Mas for further chain extension. This chain is Long-chain-fatty-acid--AMP ligase FadD28 (fadD28), found in Mycobacterium tuberculosis (strain CDC 1551 / Oshkosh).